Here is a 423-residue protein sequence, read N- to C-terminus: MTVKILVSGAGVAGTALVNFLCRSKHEYDITVVERAPALRAAGSQLDLKSFGAPLMRKLGLIEKVREKSIHETAFTFVDSKGREWARFPVNEAGKGYEGITSEFEIMRADLVAVLYEASKEVSANPFMKGPQKLRYVFGKHGVHFTQGNSKVNVVFSDGSSDDYDLVVGADGQYSMTRRLLWEPEKGSGDTTLKYTGVTAGFFQMPKSEDEADSTLFKNCLQAGPRGLCLRCAHKDFTQAMLGIPTTDEHKQVFKKPLEQQKQMWEESVGSFKWQGQRVLAELRKSDDFYMTPVAQVKVDRWSKGRVVLVGDAGYCPSVMTGRGTTVSLVGAYVLAGELAKHGDNIDAALESYEKVLRPFITTAQEIPSMGMGMFQSKFGVGVFYVLLAIISKLKIDRLLQALMKEEKETWELPEYPELEFEA.

Residues 10 to 13 (AGVA), 34 to 35 (ER), arginine 108, tyrosine 290, and aspartate 312 contribute to the FAD site. The helical transmembrane segment at 371 to 391 (GMGMFQSKFGVGVFYVLLAII) threads the bilayer.

The protein belongs to the aromatic-ring hydroxylase family. Requires FAD as cofactor.

The protein localises to the membrane. It functions in the pathway secondary metabolite biosynthesis; terpenoid biosynthesis. FAD-dependent monooxygenase; part of the gene cluster that mediates the biosynthesis of xenovulene A, an unusual meroterpenoid that has potent inhibitory effects on the human gamma-aminobutyrate A (GABAA) benzodiazepine receptor. The first step of xenovulene A biosynthesis is the biosynthesis of 3-methylorcinaldehyde performed by the non-reducing polyketide synthase aspks1. The salicylate hydroxylase asL1 then catalyzes the oxidative dearomatization of 3-methylorcinaldehyde to yield a dearomatized hydroxycyclohexadione. The 2-oxoglutarate-dependent dioxygenase asL3 further catalyzes the oxidative ring expansion to provide the first tropolone metabolite. The cytochrome P450 monooxygenase asR2 allows the synthesis of tropolone hemiacetal. In parallel, a previously unrecognised class of terpene cyclase, asR6, produces alpha-humulene from farnesylpyrophosphate (FPP). The putative Diels-Alderase asR5 probably catalyzes the formation of the tropolone-humulene skeleton by linking humulene and the polyketide moiety. Oxidative-ring contractions catalyzed by asL4 and asL6 then processively remove carbon atoms from the polyketide to yield xenovulene A. The sequence is that of FAD-dependent monooxygenase asL6 from Sarocladium schorii (Acremonium strictum (strain IMI 501407)).